The following is a 177-amino-acid chain: Large ribosomal subunit protein uL6 (177 aa).

Residues 157–177 form a disordered region; the sequence is YKGKGVRYAGEKVRRKEGKKK.

The protein belongs to the universal ribosomal protein uL6 family. In terms of assembly, part of the 50S ribosomal subunit.

This protein binds to the 23S rRNA, and is important in its secondary structure. It is located near the subunit interface in the base of the L7/L12 stalk, and near the tRNA binding site of the peptidyltransferase center. The protein is Large ribosomal subunit protein uL6 of Caulobacter vibrioides (strain ATCC 19089 / CIP 103742 / CB 15) (Caulobacter crescentus).